Consider the following 540-residue polypeptide: (13S,14R)-13-O-acetyl-1-hydroxy-N-methylcanadine 8-hydroxylase CYP82X1 (540 aa).

Residues 15 to 35 (FSIILVTTVSIVLLYSVFFWV) form a helical membrane-spanning segment. Residue C483 coordinates heme.

It belongs to the cytochrome P450 family. Heme is required as a cofactor. Highly expressed in capsules. Expressed is stems.

It localises to the membrane. The enzyme catalyses (13S,14R)-13-O-acetyl-1-hydroxy-N-methylcanadine + reduced [NADPH--hemoprotein reductase] + O2 = (13S,14R)-13-O-acetyl-1,8-dihydroxy-N-methylcanadine + oxidized [NADPH--hemoprotein reductase] + H2O + H(+). It participates in alkaloid biosynthesis. Cytochrome P450 involved in the biosynthesis of the benzylisoquinoline alkaloid noscapine. Converts (13S,14R)-13-O-acetyl-1-hydroxy-N-methylcanadine to (13S,14R)-13-O-acetyl-1,8-dihydroxy-N-methylcanadine. In Papaver somniferum (Opium poppy), this protein is (13S,14R)-13-O-acetyl-1-hydroxy-N-methylcanadine 8-hydroxylase CYP82X1.